We begin with the raw amino-acid sequence, 641 residues long: Peroxisomal targeting signal 1 receptor (641 aa).

A Glycyl cysteine thioester (Cys-Gly) (interchain with G-Cter in ubiquitin) cross-link involves residue cysteine 12. The tract at residues 12–34 (CSEPNALGNFVQHFTNERSYHDK) is amphipathic helix 1 (AH1). The amphipathic helix 2 (AH2) stretch occupies residues 74–92 (HLMMDRHLNLRDGPREHKE). Residues 261–288 (VEAAWDETARRTISDITRPITQINDPKL) form an amphipathic helix 4 (AH4) region. The WxxxF/Y motif signature appears at 331 to 335 (WTEDY). 6 TPR repeats span residues 359 to 392 (DSDT…NPEN), 393 to 426 (AMAW…DPTN), 427 to 460 (SKAR…TPEY), 503 to 536 (PEVQ…SPTD), 538 to 570 (QLWN…KPSY), and 571 to 604 (VRAR…HPAP).

It belongs to the peroxisomal targeting signal receptor family. As to quaternary structure, interacts (via WxxxF/Y and LVxEF motifs) with PEX14; promoting translocation through the PEX13-PEX14 docking complex. Interacts with PEX7, promoting peroxisomal import of proteins containing a C-terminal PTS2-type peroxisomal targeting signal. Post-translationally, monoubiquitinated at Cys-12 by PEX2 during PEX5 passage through the retrotranslocation channel. Cys-12 monoubiquitination acts as a recognition signal for the PEX1-PEX6 complex and is required for PEX5 extraction and export from peroxisomes. When PEX5 recycling is compromised, polyubiquitinated by PEX10 during its passage through the retrotranslocation channel, leading to its degradation.

Its subcellular location is the cytoplasm. The protein localises to the cytosol. The protein resides in the peroxisome matrix. Functionally, receptor that mediates peroxisomal import of proteins containing a C-terminal PTS1-type tripeptide peroxisomal targeting signal (SKL-type). Binds to cargo proteins containing a PTS1 peroxisomal targeting signal in the cytosol, and translocates them into the peroxisome matrix by passing through the PEX13-PEX14 docking complex along with cargo proteins. PEX5 receptor is then retrotranslocated into the cytosol, leading to release of bound cargo in the peroxisome matrix, and reset for a subsequent peroxisome import cycle. In terms of biological role, in addition to promoting peroxisomal translocation of proteins containing a PTS1 peroxisomal targeting signal, mediates peroxisomal import of proteins containing a C-terminal PTS2-type peroxisomal targeting signal via its interaction with PEX7. Interaction with PEX7 only takes place when PEX7 is associated with cargo proteins containing a PTS2 peroxisomal targeting signal. PEX7 along with PTS2-containing cargo proteins are then translocated through the PEX13-PEX14 docking complex together with PEX5. The protein is Peroxisomal targeting signal 1 receptor (pex5) of Dictyostelium discoideum (Social amoeba).